Here is a 218-residue protein sequence, read N- to C-terminus: MGTLLALVVGAVLVSSAWGGCVEVDSETEAVYGMTFKILCISCKRRSETTAETFTEWTFRQKGTEEFVKILRYENEVLQLEEDERFEGRVVWNGSRGTKDLQDLSIFITNVTYNHSGDYECHVYRLLFFDNYEHNTSVVKKIHLEVVDKANRDMASIVSEIMMYVLIVVLTIWLVAEMVYCYKKIAAATEAAAQENASEYLAITSESKENCTGVQVAE.

The signal sequence occupies residues Met1 to Trp18. The Extracellular portion of the chain corresponds to Gly19–Ile157. 2 disulfides stabilise this stretch: Cys21/Cys43 and Cys40/Cys121. The 129-residue stretch at Val22–Ala150 folds into the Ig-like C2-type domain. N-linked (GlcNAc...) asparagine glycosylation is found at Asn93, Asn110, Asn114, and Asn135. The chain crosses the membrane as a helical span at residues Val158–Val179. Residues Tyr180 to Glu218 are Cytoplasmic-facing.

This sequence belongs to the sodium channel auxiliary subunit SCN1B (TC 8.A.17) family. A voltage-gated sodium (Nav) channel consists of an ion-conducting pore-forming alpha subunit functional on its own that is regulated by one or more beta subunits. Interacts with SCN1A; regulatory subunit of SCN1A/Nav1.1. Interacts with SCN3A; regulatory subunit of SCN3A/Nav1.3. Interacts with SCN4A; regulatory subunit of SCN4A/Nav1.4. Interacts with SCN5A; regulatory subunit of SCN5A/Nav1.5. Interacts with SCN8A; regulatory subunit of SCN8A/Nav1.6. Interacts with SCN9A; regulatory subunit of SCN9A/Nav1.7. Interacts with SCN10A; regulatory subunit of SCN10A/Nav1.8. Interacts with NFASC. Interacts with TMEM65. In terms of tissue distribution, detected in brain (at protein level). Expressed in brain, heart, skeletal muscle and spinal cord.

It is found in the cell membrane. The protein localises to the perikaryon. It localises to the cell projection. Its subcellular location is the axon. In terms of biological role, regulatory subunit of multiple voltage-gated sodium (Nav) channels directly mediating the depolarization of excitable membranes. Navs, also called VGSCs (voltage-gated sodium channels) or VDSCs (voltage-dependent sodium channels), operate by switching between closed and open conformations depending on the voltage difference across the membrane. In the open conformation they allow Na(+) ions to selectively pass through the pore, along their electrochemical gradient. The influx of Na+ ions provokes membrane depolarization, initiating the propagation of electrical signals throughout cells and tissues. The accessory beta subunits participate in localization and functional modulation of the Nav channels. Modulates the activity of SCN1A/Nav1.1, SCN2A/Nav1.2, SCN3A/Nav1.3, SCN4A/Nav1.4, SCN5A/Nav1.5, SCN8A/Nav1.6, SCN9A/Nav1.7 and SCN10A/Nav1.8. In Rattus norvegicus (Rat), this protein is Sodium channel regulatory subunit beta-1.